The chain runs to 66 residues: Beta-mammal toxin Co1 (66 aa).

The 66-residue stretch at 1-66 folds into the LCN-type CS-alpha/beta domain; it reads KEGYLVNHST…VWPLPKKTCN (66 aa). 4 disulfides stabilise this stretch: Cys-12–Cys-65, Cys-16–Cys-41, Cys-25–Cys-46, and Cys-29–Cys-48.

In terms of tissue distribution, expressed by the venom gland.

It localises to the secreted. Beta toxins bind voltage-independently at site-4 of sodium channels (Nav) and shift the voltage of activation toward more negative potentials thereby affecting sodium channel activation and promoting spontaneous and repetitive firing. This toxin acts on human Nav1.6/SCN8A voltage-gated sodium channels. In vivo, is lethal to mice 40 minutes after intraperitoneal injection at a dose of 5ug. No activity is observed when injected into crickets or woodlice. This Centruroides ornatus (Scorpion) protein is Beta-mammal toxin Co1.